The sequence spans 89 residues: Cell division topological specificity factor (89 aa).

This sequence belongs to the MinE family.

Functionally, prevents the cell division inhibition by proteins MinC and MinD at internal division sites while permitting inhibition at polar sites. This ensures cell division at the proper site by restricting the formation of a division septum at the midpoint of the long axis of the cell. The polypeptide is Cell division topological specificity factor (Sodalis glossinidius (strain morsitans)).